The chain runs to 2475 residues: Polyprotein pp220 (2475 aa).

Gly-2 is lipidated: N-myristoyl glycine; by host. Residues 2185–2212 (KNQLIADLTTIREQLVSMRREVENMIQT) adopt a coiled-coil conformation.

It belongs to the asfivirus polyprotein pp220 family. The polyprotein is not glycosylated. In terms of processing, specific enzymatic cleavages in vivo by the viral pS273R protease yield mature proteins.

The protein resides in the host cytoplasm. Its subcellular location is the host perinuclear region. The protein localises to the virion. It is found in the host nucleus. Its function is as follows. Essential for the core assembly. Its myristoyl moiety may function as a membrane-anchoring signal to bind the developing core shell to the inner viral envelope. Functionally, the structural protein p34 is a component of the virus core shell. The structural protein p14 is a component of the virus core shell. In terms of biological role, the structural protein p37 is a component of the virus core shell. Its function is as follows. The structural protein p150 is a component of the virus core shell. The polypeptide is Polyprotein pp220 (Ornithodoros (relapsing fever ticks)).